We begin with the raw amino-acid sequence, 168 residues long: Ribosome maturation factor RimM (168 aa).

One can recognise a PRC barrel domain in the interval 95 to 168 (KEGYYWSDLI…QIMVDWELDY (74 aa)).

This sequence belongs to the RimM family. Binds ribosomal protein uS19.

It localises to the cytoplasm. Functionally, an accessory protein needed during the final step in the assembly of 30S ribosomal subunit, possibly for assembly of the head region. Essential for efficient processing of 16S rRNA. May be needed both before and after RbfA during the maturation of 16S rRNA. It has affinity for free ribosomal 30S subunits but not for 70S ribosomes. The polypeptide is Ribosome maturation factor RimM (Nitrosomonas eutropha (strain DSM 101675 / C91 / Nm57)).